A 152-amino-acid polypeptide reads, in one-letter code: Superoxide dismutase [Cu-Zn] (152 aa).

Residues H45, H47, and H62 each contribute to the Cu cation site. A disulfide bond links C56 and C145. Residues H62, H70, H79, and D82 each contribute to the Zn(2+) site. H119 lines the Cu cation pocket.

The protein belongs to the Cu-Zn superoxide dismutase family. Homodimer. Cu cation is required as a cofactor. The cofactor is Zn(2+).

It localises to the cytoplasm. The enzyme catalyses 2 superoxide + 2 H(+) = H2O2 + O2. Its function is as follows. Destroys radicals which are normally produced within the cells and which are toxic to biological systems. This is Superoxide dismutase [Cu-Zn] (SODCC) from Capsicum annuum (Capsicum pepper).